We begin with the raw amino-acid sequence, 449 residues long: Glucose-6-phosphate isomerase (449 aa).

The active-site Proton donor is the Glu291. Active-site residues include His312 and Lys426.

The protein belongs to the GPI family.

The protein localises to the cytoplasm. It catalyses the reaction alpha-D-glucose 6-phosphate = beta-D-fructose 6-phosphate. Its pathway is carbohydrate biosynthesis; gluconeogenesis. The protein operates within carbohydrate degradation; glycolysis; D-glyceraldehyde 3-phosphate and glycerone phosphate from D-glucose: step 2/4. Catalyzes the reversible isomerization of glucose-6-phosphate to fructose-6-phosphate. The protein is Glucose-6-phosphate isomerase of Streptococcus mutans serotype c (strain ATCC 700610 / UA159).